A 420-amino-acid polypeptide reads, in one-letter code: Methyltransferase/ribosomally synthesized cyclic peptide gymnopeptides precursor gymMA1 (420 aa).

A methyltransferase domain region spans residues 1–251; that stretch reads MQSSTQKQAG…GISTFYIPPK (251 aa). Residues Arg-72, Tyr-76, and Tyr-98 contribute to the active site. The S-adenosyl-L-methionine site is built by Tyr-98, His-100, Val-103, Ala-130, Gln-172, Ala-213, Ser-244, and Thr-245. Residues 252 to 378 form a clasp domain region; that stretch reads ELKDPSMDIM…WALRCAMKKM (127 aa). Positions 379-392 are precursor leader; sequence PSSFMDEVDANNLP. 2 positions are modified to N-methylvaline: Val-394 and Val-396. Residue Gly-398 is modified to N-methylglycine. Residue Val-399 is modified to N-methylvaline. Position 400 is an N-methylalanine (Ala-400). The residue at position 402 (Gly-402) is an N-methylglycine. Residues Val-404, Val-406, Val-408, and Val-410 each carry the N-methylvaline modification.

In the N-terminal section; belongs to the precorrin methyltransferase family. Homodimer. Post-translationally, gymMA1 automethylates at Val-394, Val-396, Gly-398, Val-399, Ala-400, Gly-402, Val-404, Val-406, Val-408 and Val-410 before being processed by a prolyloligopeptidase which likely forms a peptidyl ester upon removal of the follower propeptide, which then undergoes macrocyclization with the N-terminus of the modified core peptide. Peptide backbone alpha-N-methylations change the physicochemical properties of amide bonds to provide structural constraints and other favorable characteristics including biological membrane permeability to peptides.

It participates in mycotoxin biosynthesis. In terms of biological role, fusion protein of the methyltransferase gymM1 and the gymnopeptides precursor; part of the gene cluster that mediates the biosynthesis of gymnopeptides, highly methylated cyclic octadecapeptides with striking antiproliferative activity on several human cancer cell lines. Gymnopeptides derive from the C-terminus of the gymMA1 protein, and it is the gymMA1 protein that methylates its own C-terminus using S-adenosyl methionine (SAM). The C-terminus is subsequently cleaved off and macrocyclized by a prolyloligopeptidase to give the final product. This chain is Methyltransferase/ribosomally synthesized cyclic peptide gymnopeptides precursor gymMA1, found in Gymnopus fusipes (Spindle toughshank).